The chain runs to 829 residues: MPAQTSRARPVEEMTAAQAREAHESLSAEIAEHDRRYHGEDAPIISDAEYDALRRRLEAIEERFPELAGTGAASVSVGAKASDKFAKVRHAVPMLSLGNAFAEEEITEFVERVRRFLGLPASEPLAFTAEPKIDGLSLSLRYEGGRLVTAATRGDGEVGEDVTANVRTIREIPHELAGDDVPEICEVRGEVYLSHADFAAINARQEEAGRPLFANPRNAAAGSLRQLDPGITASRPLRFFAYAAGEMSSWPAETQSGLIGAFRRFGLPVNPRTKRCTSVAEMLAHYRAIETERAELGYDIDGVVYKVDEFALQRRLGFVARAPRWALAHKFPAQRAVTVIEAIEINVGRTGSLNPLARLKPVTVGGVVVSNATLHNEDYIRGIDADGNTIRSGINIWDGFRLREDVDLRQGSDVRVGDTVVVLRAGDVIPKVADVVLERRPADAVPYAFPETCPACGSHAVRAYNPRTGKLDSVRRCTGGLICPAQGQERLRHFVSRNAFDIEGFGETYIATLFEAGLVRQPADLFRLDFEPLKAAIVARRQALSAERALAAGKTPEAKKAKPKANEEDKAIHNLLAAVEARRTIPLNRFIFALGIEQVGEATAKALAKHFPDMPALMEGVRAAAACRPGPDWIELASLPRVGPTTRERLLAAAEAGETDLLADGAVTRLTSAQKEALLAAYGDRDGLRNAVERALRQKPGDAYRHLADDSEIGAVTTASLIEFFSEAHNVEAVEALLREVRTERAGTPAAAAVFSGQTVVFTGSLERMTRSEAKATAERLGAKVSGSVSAKTDLVVAGPGAGSKLKDAEKHGVRVISEAEWLAMVEAA.

The tract at residues 1–23 (MPAQTSRARPVEEMTAAQAREAH) is disordered. NAD(+) contacts are provided by residues 47–51 (DAEYD), 96–97 (SL), and glutamate 130. Lysine 132 serves as the catalytic N6-AMP-lysine intermediate. Positions 153, 190, 306, and 330 each coordinate NAD(+). Zn(2+)-binding residues include cysteine 453, cysteine 456, cysteine 477, and cysteine 483. A BRCT domain is found at 750–829 (AAAAVFSGQT…AEWLAMVEAA (80 aa)).

Belongs to the NAD-dependent DNA ligase family. LigA subfamily. Mg(2+) is required as a cofactor. It depends on Mn(2+) as a cofactor.

It catalyses the reaction NAD(+) + (deoxyribonucleotide)n-3'-hydroxyl + 5'-phospho-(deoxyribonucleotide)m = (deoxyribonucleotide)n+m + AMP + beta-nicotinamide D-nucleotide.. DNA ligase that catalyzes the formation of phosphodiester linkages between 5'-phosphoryl and 3'-hydroxyl groups in double-stranded DNA using NAD as a coenzyme and as the energy source for the reaction. It is essential for DNA replication and repair of damaged DNA. The polypeptide is DNA ligase (Methylobacterium nodulans (strain LMG 21967 / CNCM I-2342 / ORS 2060)).